Reading from the N-terminus, the 94-residue chain is Beta-defensin 132 (94 aa).

The first 22 residues, 1–22, serve as a signal peptide directing secretion; the sequence is MKFLLLVLAALGFLTQVIPASA. Intrachain disulfides connect cysteine 27-cysteine 55 and cysteine 39-cysteine 56. Positions 72–94 are disordered; that stretch reads GNHWQSRRNTQRKDKKQQTTVTS. Residues 76-86 show a composition bias toward basic residues; that stretch reads QSRRNTQRKDK.

It belongs to the beta-defensin family.

It localises to the secreted. In terms of biological role, has antibacterial activity. In Gorilla gorilla gorilla (Western lowland gorilla), this protein is Beta-defensin 132 (DEFB132).